The following is a 313-amino-acid chain: Small ribosomal subunit biogenesis GTPase RsgA (313 aa).

One can recognise a CP-type G domain in the interval 80–237 (KVALRQVIVS…LIDTPGIKEF (158 aa)). Residues 129–132 (NKVD) and 180–188 (GQSGVGKSS) contribute to the GTP site. Zn(2+) contacts are provided by Cys-261, Cys-266, His-268, and Cys-274.

This sequence belongs to the TRAFAC class YlqF/YawG GTPase family. RsgA subfamily. Monomer. Associates with 30S ribosomal subunit, binds 16S rRNA. It depends on Zn(2+) as a cofactor.

Its subcellular location is the cytoplasm. In terms of biological role, one of several proteins that assist in the late maturation steps of the functional core of the 30S ribosomal subunit. Helps release RbfA from mature subunits. May play a role in the assembly of ribosomal proteins into the subunit. Circularly permuted GTPase that catalyzes slow GTP hydrolysis, GTPase activity is stimulated by the 30S ribosomal subunit. This is Small ribosomal subunit biogenesis GTPase RsgA from Borrelia recurrentis (strain A1).